Reading from the N-terminus, the 213-residue chain is Putative tRNA methyltransferase MPN_351 (213 aa).

The protein belongs to the TrmK family.

The protein localises to the cytoplasm. This is Putative tRNA methyltransferase MPN_351 from Mycoplasma pneumoniae (strain ATCC 29342 / M129 / Subtype 1) (Mycoplasmoides pneumoniae).